A 156-amino-acid chain; its full sequence is Ribosomal RNA large subunit methyltransferase H (156 aa).

Residues Leu72, Gly104, and 123 to 128 each bind S-adenosyl-L-methionine; that span reads LSKMTL.

This sequence belongs to the RNA methyltransferase RlmH family. As to quaternary structure, homodimer.

It is found in the cytoplasm. It catalyses the reaction pseudouridine(1915) in 23S rRNA + S-adenosyl-L-methionine = N(3)-methylpseudouridine(1915) in 23S rRNA + S-adenosyl-L-homocysteine + H(+). Functionally, specifically methylates the pseudouridine at position 1915 (m3Psi1915) in 23S rRNA. In Maridesulfovibrio salexigens (strain ATCC 14822 / DSM 2638 / NCIMB 8403 / VKM B-1763) (Desulfovibrio salexigens), this protein is Ribosomal RNA large subunit methyltransferase H.